Reading from the N-terminus, the 903-residue chain is MVTNLLSKVFGSRNDRLLRSVNKVVAQINALEQEFAALSDGQLQAKTDQFRDRLAADESLDELIPEAFAVVREAGKRVLGMRHFDVQLLGGIVLHDGKIAEMRTGEGKTLVATAAAYLNALPGKGVHVVTVNDYLAQRDAQWMGPLYQFLGLSTGIIASNMDPGARKAAYMADITYGTNNEFGFDYLRDNMAFSLEEKVQRELHYAIVDEVDSILIDEARTPLIISGAAEQSSELYRQINVFMPRLKKQEREDGPGDYTVDEKARQVYLTEAGHEHAEQVMLESGLMQEGESLYDAANIGLMHHFNAALRAHVLFHKDVDYIVKDDQVVIVDEFTGRTMPGRRWSEGLHQAVEAKEGVSIQSENQTLASITFQNYFRLYEKLAGMTGTADTEAYEFQQIYGLEVVVIPTHLPMVRVDHGDQVYLTAEEKYQAIIEDIKDCHTRGQPVLVGTASIETSEHLSGLLKKEKVEHRVLNAKFHEKEAEIIAQAGRPGTVTIATNMAGRGTDIVLGGSLDAELATLGENADKAKKEEIRRRWQEGHDQVVAAGGLHIIGTERHESRRIDNQLRGRSGRQGDPGSTRFYLSLEDNLMRIFASERISGLMQRLGMEEGEAIEHPWVTRAIENAQRKVEGHNFDIRKQLLEFDDVANDQRTVIYQQRNELMAAEDVSDMVQSIRQGVIHSLVSQYIPPGSIDEQWDIPGLQEGLASEFGLEVDIAGWLEADEGLHEETLRERIMEAMEGAYGEKETLVGPQVMRHFEKAAMLQVLDSQWKEHLAMMDHLRQGIHLRGYAQKNPKQEFKREAFELFQEMLERIKHDVIALLSKVQVRTEADVEAVEHQRRAASAVEYQHAAASTMADSSGDVKSSTAESKAPYVRDGRKVGRNEPCPCGSGKKYKHCHGKLN.

Residues Gln87, 105-109 (GEGKT), and Asp507 each bind ATP. The interval 854-893 (STMADSSGDVKSSTAESKAPYVRDGRKVGRNEPCPCGSGK) is disordered. Positions 856 to 869 (MADSSGDVKSSTAE) are enriched in polar residues. Residues 874–883 (YVRDGRKVGR) show a composition bias toward basic and acidic residues. Zn(2+)-binding residues include Cys887, Cys889, Cys898, and His899.

Belongs to the SecA family. As to quaternary structure, monomer and homodimer. Part of the essential Sec protein translocation apparatus which comprises SecA, SecYEG and auxiliary proteins SecDF-YajC and YidC. The cofactor is Zn(2+).

The protein localises to the cell inner membrane. The protein resides in the cytoplasm. It catalyses the reaction ATP + H2O + cellular proteinSide 1 = ADP + phosphate + cellular proteinSide 2.. In terms of biological role, part of the Sec protein translocase complex. Interacts with the SecYEG preprotein conducting channel. Has a central role in coupling the hydrolysis of ATP to the transfer of proteins into and across the cell membrane, serving both as a receptor for the preprotein-SecB complex and as an ATP-driven molecular motor driving the stepwise translocation of polypeptide chains across the membrane. The protein is Protein translocase subunit SecA of Nitrosococcus oceani (strain ATCC 19707 / BCRC 17464 / JCM 30415 / NCIMB 11848 / C-107).